We begin with the raw amino-acid sequence, 267 residues long: Cilia- and flagella-associated protein 300 (267 aa).

The protein belongs to the CFAP300 family. As to quaternary structure, interacts with DNAAF2.

The protein resides in the cytoplasm. Its subcellular location is the cytoskeleton. It localises to the cilium axoneme. Cilium- and flagellum-specific protein that plays a role in axonemal structure organization and motility. May play a role in outer and inner dynein arm assembly. The polypeptide is Cilia- and flagella-associated protein 300 (Bos taurus (Bovine)).